The chain runs to 167 residues: Crossover junction endodeoxyribonuclease RuvC (167 aa).

Catalysis depends on residues Asp8, Glu67, and Asp139. The Mg(2+) site is built by Asp8, Glu67, and Asp139.

The protein belongs to the RuvC family. Homodimer which binds Holliday junction (HJ) DNA. The HJ becomes 2-fold symmetrical on binding to RuvC with unstacked arms; it has a different conformation from HJ DNA in complex with RuvA. In the full resolvosome a probable DNA-RuvA(4)-RuvB(12)-RuvC(2) complex forms which resolves the HJ. Mg(2+) is required as a cofactor.

The protein resides in the cytoplasm. It carries out the reaction Endonucleolytic cleavage at a junction such as a reciprocal single-stranded crossover between two homologous DNA duplexes (Holliday junction).. The RuvA-RuvB-RuvC complex processes Holliday junction (HJ) DNA during genetic recombination and DNA repair. Endonuclease that resolves HJ intermediates. Cleaves cruciform DNA by making single-stranded nicks across the HJ at symmetrical positions within the homologous arms, yielding a 5'-phosphate and a 3'-hydroxyl group; requires a central core of homology in the junction. The consensus cleavage sequence is 5'-(A/T)TT(C/G)-3'. Cleavage occurs on the 3'-side of the TT dinucleotide at the point of strand exchange. HJ branch migration catalyzed by RuvA-RuvB allows RuvC to scan DNA until it finds its consensus sequence, where it cleaves and resolves the cruciform DNA. The polypeptide is Crossover junction endodeoxyribonuclease RuvC (Halorhodospira halophila (strain DSM 244 / SL1) (Ectothiorhodospira halophila (strain DSM 244 / SL1))).